The primary structure comprises 82 residues: Defensin-like protein 75 (82 aa).

A signal peptide spans 1–26 (MAKIKSLDVITVAIILLLVIADQATA). 4 cysteine pairs are disulfide-bonded: Cys33–Cys66, Cys37–Cys55, Cys41–Cys64, and Cys45–Cys65.

The protein belongs to the DEFL family.

Its subcellular location is the secreted. The protein is Defensin-like protein 75 (LCR45) of Arabidopsis thaliana (Mouse-ear cress).